Reading from the N-terminus, the 616-residue chain is ATP-dependent zinc metalloprotease FtsH (616 aa).

Residues 1-8 (MRNLFKTA) lie on the Cytoplasmic side of the membrane. The chain crosses the membrane as a helical span at residues 9–29 (TIYILIALVILLLVDIFSGGL). The Extracellular segment spans residues 30-114 (SYNQFFSNLS…VTKEPPQVPW (85 aa)). A helical transmembrane segment spans residues 115 to 135 (WLSTFLPMLIFAGLMIFVWIF). The Cytoplasmic segment spans residues 136–616 (MLQQTQGGGS…VFEDAQPQLV (481 aa)). An ATP-binding site is contributed by 208 to 215 (GPPGTGKT). His-430 provides a ligand contact to Zn(2+). Residue Glu-431 is part of the active site. 2 residues coordinate Zn(2+): His-434 and Asp-506.

In the central section; belongs to the AAA ATPase family. The protein in the C-terminal section; belongs to the peptidase M41 family. In terms of assembly, homohexamer. The cofactor is Zn(2+).

The protein resides in the cell membrane. Acts as a processive, ATP-dependent zinc metallopeptidase for both cytoplasmic and membrane proteins. Plays a role in the quality control of integral membrane proteins. This is ATP-dependent zinc metalloprotease FtsH from Caldicellulosiruptor bescii (strain ATCC BAA-1888 / DSM 6725 / KCTC 15123 / Z-1320) (Anaerocellum thermophilum).